The primary structure comprises 159 residues: RNA pyrophosphohydrolase (159 aa).

One can recognise a Nudix hydrolase domain in the interval 6-149 (GFRPNVGIIL…KREVYRRALK (144 aa)). The short motif at 38-59 (GGINPQETPEDALYRELNEEVG) is the Nudix box element.

The protein belongs to the Nudix hydrolase family. RppH subfamily. A divalent metal cation serves as cofactor.

Functionally, accelerates the degradation of transcripts by removing pyrophosphate from the 5'-end of triphosphorylated RNA, leading to a more labile monophosphorylated state that can stimulate subsequent ribonuclease cleavage. This is RNA pyrophosphohydrolase from Pseudomonas savastanoi pv. phaseolicola (strain 1448A / Race 6) (Pseudomonas syringae pv. phaseolicola (strain 1448A / Race 6)).